Here is a 371-residue protein sequence, read N- to C-terminus: Trans-enoyl reductase calK (371 aa).

N51–K54 provides a ligand contact to NADP(+). Residue W145–F152 participates in substrate binding. NADP(+) is bound by residues G181–S184, S204–S207, Y222, and L269–E270. Residue G289–L293 coordinates substrate. Residue V359 to R360 coordinates NADP(+).

It belongs to the zinc-containing alcohol dehydrogenase family. In terms of assembly, monomer.

It functions in the pathway secondary metabolite biosynthesis. In terms of biological role, trans-enoyl reductase; part of the gene cluster that mediates the biosynthesis of calbistrin A and related compounds. Calbistrin A is a secondary metabolite with an interesting structure that was recently found to have bioactivity against leukemia cells. It consists of two polyketides linked by an ester bond: a bicyclic decalin containing polyketide and a linear 12 carbon dioic acid structure. The polyketide synthase calA is probably responsible for forming the decalin moiety. Because calA lacks a designated enoylreductase (ER) domain, the required activity is provided by the trans-enoyl reductase calK. Following release from the PKS, calF then probably catalyzes the oxidation and the subsequent Diels Alder cycloisomerization that lead to the formation of the decalin moiety. The decalin polyketide backbone includes two C-methyl groups, at C7 and C11 in backbone, of which the C7 position is probably methylated by the methyltransferase domain of calA. A candidate for adding the methyl group at C11, if not done by CalA, is the cluster methyltransferase calH. Several additional tailoring enzymes within the cluster could be involved in the modification of the decalin polyketide product. Those include the 3 cytochrome P450 monooxygenases CalE, CalG and CalL, of which one might be responsible for the introduction of the extra hydroxyl group attached to the backbone of the decalin moiety, at position C9 in the backbone, that allows for attachment of the linear moiety. One tailoring enzyme activity that is expected to be involved in biosynthesis of calbistrin is an acyltransferase for connecting the two polyketide synthase products, and which could be performed by the cluster acyltransferase calJ. The enzyme responsible for the biosynthesis of the linear moiety, probably a second PKS, has not been identified yet. The chain is Trans-enoyl reductase calK from Penicillium decumbens.